We begin with the raw amino-acid sequence, 721 residues long: Polyribonucleotide nucleotidyltransferase (721 aa).

Residues Asp495 and Asp501 each contribute to the Mg(2+) site. A KH domain is found at 562-621 (PRLLSFRIDPELIGTVIGPGGRTIKGITERTNTKIDIEDGGIVTIASHDGAAAEEAQKII). An S1 motif domain is found at 631 to 699 (GEIFSGVVTR…SRGRINLTLR (69 aa)). The disordered stretch occupies residues 701–721 (VGQNNGMSYPEPTPTPVAPLN). Pro residues predominate over residues 711 to 721 (EPTPTPVAPLN).

Belongs to the polyribonucleotide nucleotidyltransferase family. Requires Mg(2+) as cofactor.

Its subcellular location is the cytoplasm. It carries out the reaction RNA(n+1) + phosphate = RNA(n) + a ribonucleoside 5'-diphosphate. In terms of biological role, involved in mRNA degradation. Catalyzes the phosphorolysis of single-stranded polyribonucleotides processively in the 3'- to 5'-direction. The polypeptide is Polyribonucleotide nucleotidyltransferase (Prochlorococcus marinus (strain MIT 9215)).